We begin with the raw amino-acid sequence, 316 residues long: N-acetylmuramic acid 6-phosphate etherase (316 aa).

The tract at residues 1–23 is disordered; the sequence is MAGFDPTLQPSDDRGHLLTEQSN. In terms of domain architecture, SIS spans 66 to 229; sequence ISKRLSSGGR…STTVMVRLGK (164 aa). The Proton donor role is filled by E94. E125 is a catalytic residue.

Belongs to the GCKR-like family. MurNAc-6-P etherase subfamily. In terms of assembly, homodimer.

It carries out the reaction N-acetyl-D-muramate 6-phosphate + H2O = N-acetyl-D-glucosamine 6-phosphate + (R)-lactate. Its pathway is amino-sugar metabolism; N-acetylmuramate degradation. In terms of biological role, specifically catalyzes the cleavage of the D-lactyl ether substituent of MurNAc 6-phosphate, producing GlcNAc 6-phosphate and D-lactate. The polypeptide is N-acetylmuramic acid 6-phosphate etherase (Synechococcus sp. (strain CC9902)).